A 683-amino-acid chain; its full sequence is Glycine--tRNA ligase beta subunit (683 aa).

The protein belongs to the class-II aminoacyl-tRNA synthetase family. As to quaternary structure, tetramer of two alpha and two beta subunits.

The protein localises to the cytoplasm. The catalysed reaction is tRNA(Gly) + glycine + ATP = glycyl-tRNA(Gly) + AMP + diphosphate. The sequence is that of Glycine--tRNA ligase beta subunit from Pseudomonas putida (strain GB-1).